The chain runs to 318 residues: Transaldolase (318 aa).

Residue lysine 126 is the Schiff-base intermediate with substrate of the active site.

The protein belongs to the transaldolase family. Type 1 subfamily. In terms of assembly, homodimer.

It localises to the cytoplasm. It catalyses the reaction D-sedoheptulose 7-phosphate + D-glyceraldehyde 3-phosphate = D-erythrose 4-phosphate + beta-D-fructose 6-phosphate. The protein operates within carbohydrate degradation; pentose phosphate pathway; D-glyceraldehyde 3-phosphate and beta-D-fructose 6-phosphate from D-ribose 5-phosphate and D-xylulose 5-phosphate (non-oxidative stage): step 2/3. Functionally, transaldolase is important for the balance of metabolites in the pentose-phosphate pathway. In Cupriavidus metallidurans (strain ATCC 43123 / DSM 2839 / NBRC 102507 / CH34) (Ralstonia metallidurans), this protein is Transaldolase.